The primary structure comprises 173 residues: U4/U6.U5 small nuclear ribonucleoprotein component snu23 (173 aa).

A Matrin-type zinc finger spans residues 55 to 85 (WYCEACNETYKDSLSWLDHLNSTQHLRKTRT). Residues 119-149 (SLKERVERYHQELEAKKLRRKQKKVNKEKNS) adopt a coiled-coil conformation.

Component of the 25S U4/U6.U5 tri-snRNP particle, a subcomplex of the spliceosome.

It localises to the cytoplasm. Its subcellular location is the cytoskeleton. It is found in the microtubule organizing center. The protein resides in the spindle pole body. The protein localises to the nucleus. In Schizosaccharomyces pombe (strain 972 / ATCC 24843) (Fission yeast), this protein is U4/U6.U5 small nuclear ribonucleoprotein component snu23 (snu23).